Here is a 143-residue protein sequence, read N- to C-terminus: Nucleoside diphosphate kinase (143 aa).

ATP contacts are provided by Lys-11, Phe-59, Arg-87, Thr-93, Arg-104, and Asn-114. His-117 functions as the Pros-phosphohistidine intermediate in the catalytic mechanism.

Belongs to the NDK family. In terms of assembly, homotetramer. It depends on Mg(2+) as a cofactor.

It is found in the cytoplasm. It catalyses the reaction a 2'-deoxyribonucleoside 5'-diphosphate + ATP = a 2'-deoxyribonucleoside 5'-triphosphate + ADP. The enzyme catalyses a ribonucleoside 5'-diphosphate + ATP = a ribonucleoside 5'-triphosphate + ADP. Major role in the synthesis of nucleoside triphosphates other than ATP. The ATP gamma phosphate is transferred to the NDP beta phosphate via a ping-pong mechanism, using a phosphorylated active-site intermediate. This Shewanella halifaxensis (strain HAW-EB4) protein is Nucleoside diphosphate kinase.